The primary structure comprises 325 residues: VSG expression site-associated protein 117A (325 aa).

The N-terminal stretch at 1-23 is a signal peptide; the sequence is MKVTIVELVVWLFSVNFFVVVAE. 3 N-linked (GlcNAc...) asparagine glycosylation sites follow: N72, N290, and N313.

Functionally, not known but may be related to activation of the variant surface glycoprotein genes. The protein is VSG expression site-associated protein 117A of Trypanosoma brucei brucei.